The following is a 282-amino-acid chain: NAD(P)H-hydrate epimerase (282 aa).

The transit peptide at 1-53 (MSGLRTLLGLGLLVAGSRLPRIASRQSVCRAGPIWWGTQHRSSETMASAAVKY) directs the protein to the mitochondrion. A YjeF N-terminal domain is found at 59–269 (AQAVDEELFN…ALEKKYQLNL (211 aa)). Residue 113–117 (NNGGD) coordinates (6S)-NADPHX. Position 114 (Asn114) interacts with K(+). Lys138 carries the N6-succinyllysine modification. Asp179 is a K(+) binding site. Residues 183–189 (GFSFKGD) and Asp212 each bind (6S)-NADPHX. Residue Ser215 coordinates K(+).

Belongs to the NnrE/AIBP family. As to quaternary structure, homodimer. Interacts with APOA1 and APOA2. The cofactor is K(+). Post-translationally, undergoes physiological phosphorylation during sperm capacitation, downstream to PKA activation.

Its subcellular location is the mitochondrion. The protein localises to the secreted. The catalysed reaction is (6R)-NADHX = (6S)-NADHX. It carries out the reaction (6R)-NADPHX = (6S)-NADPHX. Functionally, catalyzes the epimerization of the S- and R-forms of NAD(P)HX, a damaged form of NAD(P)H that is a result of enzymatic or heat-dependent hydration. This is a prerequisite for the S-specific NAD(P)H-hydrate dehydratase to allow the repair of both epimers of NAD(P)HX. Accelerates cholesterol efflux from endothelial cells to high-density lipoprotein (HDL) and thereby regulates angiogenesis. The sequence is that of NAD(P)H-hydrate epimerase from Rattus norvegicus (Rat).